A 372-amino-acid polypeptide reads, in one-letter code: Cobalt-precorrin-5B C(1)-methyltransferase (372 aa).

Belongs to the CbiD family.

It catalyses the reaction Co-precorrin-5B + S-adenosyl-L-methionine = Co-precorrin-6A + S-adenosyl-L-homocysteine. It participates in cofactor biosynthesis; adenosylcobalamin biosynthesis; cob(II)yrinate a,c-diamide from sirohydrochlorin (anaerobic route): step 6/10. Its function is as follows. Catalyzes the methylation of C-1 in cobalt-precorrin-5B to form cobalt-precorrin-6A. The chain is Cobalt-precorrin-5B C(1)-methyltransferase from Prochlorococcus marinus subsp. pastoris (strain CCMP1986 / NIES-2087 / MED4).